A 324-amino-acid polypeptide reads, in one-letter code: tRNA U34 carboxymethyltransferase (324 aa).

Carboxy-S-adenosyl-L-methionine-binding positions include Lys-91, Trp-105, Lys-110, Gly-130, 152–154 (DPS), 181–182 (IE), Met-196, Tyr-200, and Arg-315.

It belongs to the class I-like SAM-binding methyltransferase superfamily. CmoB family. In terms of assembly, homotetramer.

The enzyme catalyses carboxy-S-adenosyl-L-methionine + 5-hydroxyuridine(34) in tRNA = 5-carboxymethoxyuridine(34) in tRNA + S-adenosyl-L-homocysteine + H(+). Functionally, catalyzes carboxymethyl transfer from carboxy-S-adenosyl-L-methionine (Cx-SAM) to 5-hydroxyuridine (ho5U) to form 5-carboxymethoxyuridine (cmo5U) at position 34 in tRNAs. In Aliivibrio salmonicida (strain LFI1238) (Vibrio salmonicida (strain LFI1238)), this protein is tRNA U34 carboxymethyltransferase.